The primary structure comprises 518 residues: Cytochrome P450 CYP72A219 (518 aa).

The chain crosses the membrane as a helical span at residues 2 to 22 (ELVLKLISSFCAIVVVILLGW). Cysteine 465 provides a ligand contact to heme.

The protein belongs to the cytochrome P450 family. Requires heme as cofactor.

The protein localises to the membrane. In terms of biological role, probable heme-thiolate monooxygenase. The sequence is that of Cytochrome P450 CYP72A219 from Panax ginseng (Korean ginseng).